Here is a 323-residue protein sequence, read N- to C-terminus: tRNA-dihydrouridine(16) synthase (323 aa).

Residues 7–9 and Gln-68 contribute to the FMN site; that span reads PME. The active-site Proton donor is the Cys-98. FMN-binding positions include Lys-139, 199–201, and 223–224; these read NGE and GR.

The protein belongs to the Dus family. DusC subfamily. FMN serves as cofactor.

It carries out the reaction 5,6-dihydrouridine(16) in tRNA + NADP(+) = uridine(16) in tRNA + NADPH + H(+). The enzyme catalyses 5,6-dihydrouridine(16) in tRNA + NAD(+) = uridine(16) in tRNA + NADH + H(+). In terms of biological role, catalyzes the synthesis of 5,6-dihydrouridine (D), a modified base found in the D-loop of most tRNAs, via the reduction of the C5-C6 double bond in target uridines. Specifically modifies U16 in tRNAs. This chain is tRNA-dihydrouridine(16) synthase, found in Pseudomonas putida (strain ATCC 47054 / DSM 6125 / CFBP 8728 / NCIMB 11950 / KT2440).